The chain runs to 89 residues: MGGISIWQLLIIALIVVLLFGTKKLRSLGGDLGGAVKGFKNAMSSEEEKKALEENATDKPAADTAKVTETAKVAETAEKKAESKGKEQA.

A helical transmembrane segment spans residues 1-21 (MGGISIWQLLIIALIVVLLFG). The span at 47–61 (EEKKALEENATDKPA) shows a compositional bias: basic and acidic residues. The disordered stretch occupies residues 47–89 (EEKKALEENATDKPAADTAKVTETAKVAETAEKKAESKGKEQA). The segment covering 62-74 (ADTAKVTETAKVA) has biased composition (low complexity). Over residues 75 to 89 (ETAEKKAESKGKEQA) the composition is skewed to basic and acidic residues.

Belongs to the TatA/E family. In terms of assembly, the Tat system comprises two distinct complexes: a TatABC complex, containing multiple copies of TatA, TatB and TatC subunits, and a separate TatA complex, containing only TatA subunits. Substrates initially bind to the TatABC complex, which probably triggers association of the separate TatA complex to form the active translocon.

The protein resides in the cell inner membrane. In terms of biological role, part of the twin-arginine translocation (Tat) system that transports large folded proteins containing a characteristic twin-arginine motif in their signal peptide across membranes. TatA could form the protein-conducting channel of the Tat system. In Shewanella pealeana (strain ATCC 700345 / ANG-SQ1), this protein is Sec-independent protein translocase protein TatA.